We begin with the raw amino-acid sequence, 218 residues long: uncharacterized protein (218 aa).

It belongs to the mimivirus L6/L7/L57 family.

This is an uncharacterized protein from Acanthamoeba polyphaga mimivirus (APMV).